A 232-amino-acid polypeptide reads, in one-letter code: DnaJ homolog subfamily B member 8 (232 aa).

A J domain is found at 3–69; it reads NYYEVLGVQA…KKRSLYDRAG (67 aa).

In terms of assembly, interacts with histone deacetylases HDAC4, HDAC6, and SIRT2, HDAC activity is required for antiaggregation.

In terms of biological role, efficient suppressor of aggregation and toxicity of disease-associated polyglutamine proteins. This chain is DnaJ homolog subfamily B member 8 (DNAJB8), found in Homo sapiens (Human).